Consider the following 539-residue polypeptide: D-mannonate oxidoreductase (539 aa).

39–50 (WVHFGGGNIFRG) is a binding site for NAD(+).

The protein belongs to the mannitol dehydrogenase family. UxuB subfamily.

It catalyses the reaction D-mannonate + NAD(+) = keto-D-fructuronate + NADH + H(+). It participates in carbohydrate metabolism. In terms of biological role, catalyzes the reduction of D-fructuronate (D-FruA) to D-mannonate (D-ManA). The sequence is that of D-mannonate oxidoreductase from Thermotoga maritima (strain ATCC 43589 / DSM 3109 / JCM 10099 / NBRC 100826 / MSB8).